Here is a 225-residue protein sequence, read N- to C-terminus: MTKRYFITGTDTNVGKTLAACALLQAAISIGYHAAGYKPVATGYQLTLDGPRNNDALALLSNSNVILSYSQVNPLVFSEPTSPHIACRAEGRNIELSELSAGLKVIEQKSDWIVVEGAGGWFTPLGEGILYSDWVNYEKLPVILVIGMKLGCINHALLTALAIRQFGLQLVGWIANHIQPTTTWSQHYLAELRNRLDAPLIGDIPWLSNIPVALLAKYINLAELS.

13 to 18 (NVGKTL) contributes to the ATP binding site. Thr17 contributes to the Mg(2+) binding site. The active site involves Lys38. Residue Thr42 coordinates substrate. Residues Asp55, 116 to 119 (EGAG), 176 to 177 (NH), and 205 to 207 (PWL) contribute to the ATP site. Mg(2+) contacts are provided by Asp55 and Glu116.

Belongs to the dethiobiotin synthetase family. As to quaternary structure, homodimer. Requires Mg(2+) as cofactor.

The protein localises to the cytoplasm. The catalysed reaction is (7R,8S)-7,8-diammoniononanoate + CO2 + ATP = (4R,5S)-dethiobiotin + ADP + phosphate + 3 H(+). It participates in cofactor biosynthesis; biotin biosynthesis; biotin from 7,8-diaminononanoate: step 1/2. Functionally, catalyzes a mechanistically unusual reaction, the ATP-dependent insertion of CO2 between the N7 and N8 nitrogen atoms of 7,8-diaminopelargonic acid (DAPA, also called 7,8-diammoniononanoate) to form a ureido ring. The sequence is that of ATP-dependent dethiobiotin synthetase BioD from Baumannia cicadellinicola subsp. Homalodisca coagulata.